The following is a 377-amino-acid chain: Queuine tRNA-ribosyltransferase (377 aa).

D89 (proton acceptor) is an active-site residue. Substrate-binding positions include 89-93, D143, Q188, and G215; that span reads DSGGF. Residues 246 to 252 are RNA binding; sequence GVGKPED. D265 serves as the catalytic Nucleophile. An RNA binding; important for wobble base 34 recognition region spans residues 270–274; it reads TRNAR. Zn(2+) contacts are provided by C303, C305, C308, and H334.

The protein belongs to the queuine tRNA-ribosyltransferase family. In terms of assembly, homodimer. Within each dimer, one monomer is responsible for RNA recognition and catalysis, while the other monomer binds to the replacement base PreQ1. Zn(2+) serves as cofactor.

It carries out the reaction 7-aminomethyl-7-carbaguanine + guanosine(34) in tRNA = 7-aminomethyl-7-carbaguanosine(34) in tRNA + guanine. It functions in the pathway tRNA modification; tRNA-queuosine biosynthesis. Its function is as follows. Catalyzes the base-exchange of a guanine (G) residue with the queuine precursor 7-aminomethyl-7-deazaguanine (PreQ1) at position 34 (anticodon wobble position) in tRNAs with GU(N) anticodons (tRNA-Asp, -Asn, -His and -Tyr). Catalysis occurs through a double-displacement mechanism. The nucleophile active site attacks the C1' of nucleotide 34 to detach the guanine base from the RNA, forming a covalent enzyme-RNA intermediate. The proton acceptor active site deprotonates the incoming PreQ1, allowing a nucleophilic attack on the C1' of the ribose to form the product. After dissociation, two additional enzymatic reactions on the tRNA convert PreQ1 to queuine (Q), resulting in the hypermodified nucleoside queuosine (7-(((4,5-cis-dihydroxy-2-cyclopenten-1-yl)amino)methyl)-7-deazaguanosine). This is Queuine tRNA-ribosyltransferase from Acinetobacter baumannii (strain ACICU).